Here is a 1026-residue protein sequence, read N- to C-terminus: uncharacterized protein (1026 aa).

4 WD repeats span residues 14–53, 62–104, 148–187, and 937–977; these read LLDEGLDVSSIHCFDQYLIVGQCSGQVMVFDVSTDNHFTL, HSVS…RRAT, GHEDWPILFPFKDEALLIPVAYSDGSVSLWSVDWSALTFK, and NAEC…VKFL.

It localises to the cytoplasm. The protein localises to the nucleus. This is an uncharacterized protein from Schizosaccharomyces pombe (strain 972 / ATCC 24843) (Fission yeast).